Consider the following 303-residue polypeptide: Probable cell division protein WhiA (303 aa).

Residues 272 to 303 constitute a DNA-binding region (H-T-H motif); the sequence is SIQQLADSLSTPLTKSGVNHRLRKINKIADEL.

The protein belongs to the WhiA family.

Its function is as follows. Involved in cell division and chromosome segregation. This is Probable cell division protein WhiA from Streptococcus pneumoniae serotype 4 (strain ATCC BAA-334 / TIGR4).